A 122-amino-acid chain; its full sequence is Large ribosomal subunit protein uL14 (122 aa).

It belongs to the universal ribosomal protein uL14 family. In terms of assembly, part of the 50S ribosomal subunit. Forms a cluster with proteins L3 and L19. In the 70S ribosome, L14 and L19 interact and together make contacts with the 16S rRNA in bridges B5 and B8.

Binds to 23S rRNA. Forms part of two intersubunit bridges in the 70S ribosome. The chain is Large ribosomal subunit protein uL14 from Nitrosospira multiformis (strain ATCC 25196 / NCIMB 11849 / C 71).